A 50-amino-acid polypeptide reads, in one-letter code: Putative protein HokF (50 aa).

The helical transmembrane segment at 5–25 threads the bilayer; that stretch reads YALVAVIVLCLTVPGFTLLVG.

Belongs to the Hok/Gef family.

It localises to the cell inner membrane. Its function is as follows. Toxic component of a type I toxin-antitoxin (TA) system. When overexpressed kills cells within minutes; causes collapse of the transmembrane potential and arrest of respiration. Its toxic effect is probably neutralized by an antisense antitoxin Sok RNA. The sequence is that of Putative protein HokF (hokF) from Escherichia coli O157:H7.